A 395-amino-acid chain; its full sequence is S-adenosylmethionine synthase (395 aa).

H16 contributes to the ATP binding site. D18 contacts Mg(2+). Position 44 (E44) interacts with K(+). E57 and Q100 together coordinate L-methionine. Residues 100-110 are flexible loop; that stretch reads QSPDIAQGVDD. Residues 174–176, 241–242, D250, 256–257, A273, and K277 contribute to the ATP site; these read DAK, RF, and RK. D250 contributes to the L-methionine binding site. K281 contributes to the L-methionine binding site.

This sequence belongs to the AdoMet synthase family. As to quaternary structure, homotetramer; dimer of dimers. Requires Mg(2+) as cofactor. The cofactor is K(+).

The protein localises to the cytoplasm. The catalysed reaction is L-methionine + ATP + H2O = S-adenosyl-L-methionine + phosphate + diphosphate. It functions in the pathway amino-acid biosynthesis; S-adenosyl-L-methionine biosynthesis; S-adenosyl-L-methionine from L-methionine: step 1/1. In terms of biological role, catalyzes the formation of S-adenosylmethionine (AdoMet) from methionine and ATP. The overall synthetic reaction is composed of two sequential steps, AdoMet formation and the subsequent tripolyphosphate hydrolysis which occurs prior to release of AdoMet from the enzyme. The protein is S-adenosylmethionine synthase of Levilactobacillus brevis (strain ATCC 367 / BCRC 12310 / CIP 105137 / JCM 1170 / LMG 11437 / NCIMB 947 / NCTC 947) (Lactobacillus brevis).